We begin with the raw amino-acid sequence, 734 residues long: Photosystem I P700 chlorophyll a apoprotein A2 (734 aa).

8 helical membrane passes run 46-69 (IFASHFGQLAIIFLWTSGNLFHVA), 135-158 (LYSGALFLLFLSAISLLAGWLHLQ), 175-199 (LNHHLSGLFGVSSLAWTGHLVHVAI), 273-291 (MAHHHLAIAILFLLAGHMY), 330-353 (IHFQLGLALASLGVITSLVAQHMY), 369-395 (AALYTHHQYIAGFIMTGAFAHGAIFFI), 417-439 (AIISHLSWASLFLGFHTLGLYVH), and 517-535 (FLVHHAIALGLHTTTLILV). [4Fe-4S] cluster contacts are provided by C559 and C568. 2 consecutive transmembrane segments (helical) span residues 575–596 (AFYLAVFWMLNTIGWVTFYWHW) and 643–665 (LSVWAWMFLFGHLVWATGFMFLI). Chlorophyll a-binding residues include H654, M662, and Y670. Position 671 (W671) interacts with phylloquinone. The helical transmembrane segment at 707 to 727 (LVGLAHFSVGYIFTYAAFLIA) threads the bilayer.

The protein belongs to the PsaA/PsaB family. In terms of assembly, the PsaA/B heterodimer binds the P700 chlorophyll special pair and subsequent electron acceptors. PSI consists of a core antenna complex that captures photons, and an electron transfer chain that converts photonic excitation into a charge separation. The eukaryotic PSI reaction center is composed of at least 11 subunits. It depends on P700 is a chlorophyll a/chlorophyll a' dimer, A0 is one or more chlorophyll a, A1 is one or both phylloquinones and FX is a shared 4Fe-4S iron-sulfur center. as a cofactor.

The protein localises to the plastid. It localises to the chloroplast thylakoid membrane. It catalyses the reaction reduced [plastocyanin] + hnu + oxidized [2Fe-2S]-[ferredoxin] = oxidized [plastocyanin] + reduced [2Fe-2S]-[ferredoxin]. In terms of biological role, psaA and PsaB bind P700, the primary electron donor of photosystem I (PSI), as well as the electron acceptors A0, A1 and FX. PSI is a plastocyanin-ferredoxin oxidoreductase, converting photonic excitation into a charge separation, which transfers an electron from the donor P700 chlorophyll pair to the spectroscopically characterized acceptors A0, A1, FX, FA and FB in turn. Oxidized P700 is reduced on the lumenal side of the thylakoid membrane by plastocyanin. This is Photosystem I P700 chlorophyll a apoprotein A2 from Lotus japonicus (Lotus corniculatus var. japonicus).